The sequence spans 146 residues: Hemoglobin subunit beta (146 aa).

Position 1 is an N-acetylvaline (V1). The region spanning 2-146 is the Globin domain; it reads HLTGEEKAAV…VANALAHKYH (145 aa). T12 bears the Phosphothreonine mark. S44 carries the phosphoserine modification. An N6-acetyllysine modification is found at K59. H63 provides a ligand contact to heme b. At K82 the chain carries N6-acetyllysine. H92 is a heme b binding site. Residue C93 is modified to S-nitrosocysteine. K144 bears the N6-acetyllysine mark.

This sequence belongs to the globin family. In terms of assembly, heterotetramer of two alpha chains and two beta chains. As to expression, red blood cells.

Involved in oxygen transport from the lung to the various peripheral tissues. The chain is Hemoglobin subunit beta (HBB) from Lutra lutra (European river otter).